Reading from the N-terminus, the 514-residue chain is Anthranilate synthase component 1 (514 aa).

L-tryptophan-binding positions include Thr40 and 291-293; that span reads PYM. 328 to 329 is a binding site for chorismate; that stretch reads GT. Glu361 contacts Mg(2+). Residues Tyr449, Arg469, 482–484, and Gly484 contribute to the chorismate site; that span reads GAG. Residue Glu497 participates in Mg(2+) binding.

This sequence belongs to the anthranilate synthase component I family. As to quaternary structure, heterotetramer consisting of two non-identical subunits: a beta subunit (TrpG) and a large alpha subunit (TrpE). Requires Mg(2+) as cofactor.

The enzyme catalyses chorismate + L-glutamine = anthranilate + pyruvate + L-glutamate + H(+). The protein operates within amino-acid biosynthesis; L-tryptophan biosynthesis; L-tryptophan from chorismate: step 1/5. Its activity is regulated as follows. Feedback inhibited by tryptophan. In terms of biological role, part of a heterotetrameric complex that catalyzes the two-step biosynthesis of anthranilate, an intermediate in the biosynthesis of L-tryptophan. In the first step, the glutamine-binding beta subunit (TrpG) of anthranilate synthase (AS) provides the glutamine amidotransferase activity which generates ammonia as a substrate that, along with chorismate, is used in the second step, catalyzed by the large alpha subunit of AS (TrpE) to produce anthranilate. In the absence of TrpG, TrpE can synthesize anthranilate directly from chorismate and high concentrations of ammonia. The chain is Anthranilate synthase component 1 (trpE) from Buchnera aphidicola subsp. Rhopalosiphum maidis.